The sequence spans 634 residues: MSVETQKETLGFQTEVKQLLHLMIHSLYSNKEIFLRELISNASDAVDKLRFEALSKPELLEGGAELKIRVSFDKDAKTVTLEDNGIGMSREDVITHLGTIAKSGTADFMKNLTGDQKKDSHLIGQFGVGFYSAFIVADQVEVFSRRAGLPASEGVHWSSKGEGEFEVATIDKAERGTRIVLHLKSGEDEFADGWRLRNIIKKYSDHIALPIELPKEAAAAEGEEKPALEWETVNRASALWTRPRTEIKDEEYQEFYKHIAHDFENPLSWSHNKVEGKLEYSSLLYVPARAPFDLYQREAPKGLKLYVQRVFVMDQAESFLPLYLRFIKGVVDSNDLSLNVSREILQKDPIIDSMKSALTKRVLDMLEKLAKNEPEQYKGFWKNFGQVMKEGPAEDFANKEKIAGLLRFASTQGDDGEQNVSLADYLARAKEGQDKIYFLTGESYAQVKNSPHLEVFRKKGIEVLLLTDRIDEWLMSYLNEFDGKSFVDVARGDLDLGNLDSEEDKKAAEEVAKTKEGLVERIKTALGESVSEVRVSHRLTDSPAILAIGEQDLGLQMRQILEASGQKVPDSKPIFEFNPTHPLIEKLDGEQSEERFGDLSHILFDQAALAAGDSLKDPAAYVRRLNKLLVELSV.

Residues 1–342 (MSVETQKETL…SNDLSLNVSR (342 aa)) form an a; substrate-binding region. The tract at residues 343 to 559 (EILQKDPIID…EQDLGLQMRQ (217 aa)) is b. The interval 560 to 634 (ILEASGQKVP…LNKLLVELSV (75 aa)) is c.

Belongs to the heat shock protein 90 family. In terms of assembly, homodimer.

The protein localises to the cytoplasm. In terms of biological role, molecular chaperone. Has ATPase activity. The chain is Chaperone protein HtpG from Pseudomonas fluorescens (strain ATCC BAA-477 / NRRL B-23932 / Pf-5).